The sequence spans 378 residues: MSKRDFYEILGVSKTADNKEIKRAYRKLAMKYHPDRNSEDPDAEEKFKEASMAYEVLSSEEKRSAYDRMGHAAFENGMGGGGFGGGGGGNFQDIFGDIFGNFGDIFGQSRGGGGGRSRRGSDLRYVIELTLEEAVRGCKKEISFTAPAPCDTCDGKGAKNASDIVTCQTCHGQGQVRMQQGFFAVQQACPHCGGTGKQIKNPCSDCHGNGVKDKSRTLEVSIPAGVDDGDRVRLAGEGEAGGAGVQNGDLYVEVRVKQHNVFTRQGADLYMDVPVSITDAALGKEVEIPTLDGKVKIKVAEGTQSGKLLRVRGRGVTPVRTTMKGDLICRVVIETPVNLTREQKDLLRQFQDTLDGDSKHQQSPHKKSFFKKIGDLFD.

One can recognise a J domain in the interval 5–70 (DFYEILGVSK…EKRSAYDRMG (66 aa)). The segment at 137–215 (GCKKEISFTA…CHGNGVKDKS (79 aa)) adopts a CR-type zinc-finger fold. Zn(2+) is bound by residues Cys-150, Cys-153, Cys-167, Cys-170, Cys-189, Cys-192, Cys-203, and Cys-206. 4 CXXCXGXG motif repeats span residues 150–157 (CDTCDGKG), 167–174 (CQTCHGQG), 189–196 (CPHCGGTG), and 203–210 (CSDCHGNG).

This sequence belongs to the DnaJ family. In terms of assembly, homodimer. Requires Zn(2+) as cofactor.

Its subcellular location is the cytoplasm. Functionally, participates actively in the response to hyperosmotic and heat shock by preventing the aggregation of stress-denatured proteins and by disaggregating proteins, also in an autonomous, DnaK-independent fashion. Unfolded proteins bind initially to DnaJ; upon interaction with the DnaJ-bound protein, DnaK hydrolyzes its bound ATP, resulting in the formation of a stable complex. GrpE releases ADP from DnaK; ATP binding to DnaK triggers the release of the substrate protein, thus completing the reaction cycle. Several rounds of ATP-dependent interactions between DnaJ, DnaK and GrpE are required for fully efficient folding. Also involved, together with DnaK and GrpE, in the DNA replication of plasmids through activation of initiation proteins. This chain is Chaperone protein DnaJ, found in Psychrobacter cryohalolentis (strain ATCC BAA-1226 / DSM 17306 / VKM B-2378 / K5).